Reading from the N-terminus, the 249-residue chain is Aliphatic sulfonates import ATP-binding protein SsuB 2 (249 aa).

Residues 5–233 (LDLLEIRKAY…PRDRRAVELA (229 aa)) enclose the ABC transporter domain. 37–44 (GPSGCGKS) lines the ATP pocket.

This sequence belongs to the ABC transporter superfamily. Aliphatic sulfonates importer (TC 3.A.1.17.2) family. As to quaternary structure, the complex is composed of two ATP-binding proteins (SsuB), two transmembrane proteins (SsuC) and a solute-binding protein (SsuA).

The protein localises to the cell inner membrane. It catalyses the reaction ATP + H2O + aliphatic sulfonate-[sulfonate-binding protein]Side 1 = ADP + phosphate + aliphatic sulfonateSide 2 + [sulfonate-binding protein]Side 1.. Functionally, part of the ABC transporter complex SsuABC involved in aliphatic sulfonates import. Responsible for energy coupling to the transport system. The chain is Aliphatic sulfonates import ATP-binding protein SsuB 2 from Pseudomonas aeruginosa (strain ATCC 15692 / DSM 22644 / CIP 104116 / JCM 14847 / LMG 12228 / 1C / PRS 101 / PAO1).